Reading from the N-terminus, the 124-residue chain is UPF0738 protein GWCH70_0774 (124 aa).

It belongs to the UPF0738 family.

This chain is UPF0738 protein GWCH70_0774, found in Geobacillus sp. (strain WCH70).